Reading from the N-terminus, the 193-residue chain is Crossover junction endodeoxyribonuclease RuvC (193 aa).

Active-site residues include Asp7, Glu68, and Asp141. Positions 7, 68, and 141 each coordinate Mg(2+). Positions 174 to 193 are disordered; that stretch reads RQWAQATQHATRRRGVRRGM. The span at 183-193 shows a compositional bias: basic residues; sequence ATRRRGVRRGM.

This sequence belongs to the RuvC family. As to quaternary structure, homodimer which binds Holliday junction (HJ) DNA. The HJ becomes 2-fold symmetrical on binding to RuvC with unstacked arms; it has a different conformation from HJ DNA in complex with RuvA. In the full resolvosome a probable DNA-RuvA(4)-RuvB(12)-RuvC(2) complex forms which resolves the HJ. Mg(2+) serves as cofactor.

It localises to the cytoplasm. The enzyme catalyses Endonucleolytic cleavage at a junction such as a reciprocal single-stranded crossover between two homologous DNA duplexes (Holliday junction).. In terms of biological role, the RuvA-RuvB-RuvC complex processes Holliday junction (HJ) DNA during genetic recombination and DNA repair. Endonuclease that resolves HJ intermediates. Cleaves cruciform DNA by making single-stranded nicks across the HJ at symmetrical positions within the homologous arms, yielding a 5'-phosphate and a 3'-hydroxyl group; requires a central core of homology in the junction. The consensus cleavage sequence is 5'-(A/T)TT(C/G)-3'. Cleavage occurs on the 3'-side of the TT dinucleotide at the point of strand exchange. HJ branch migration catalyzed by RuvA-RuvB allows RuvC to scan DNA until it finds its consensus sequence, where it cleaves and resolves the cruciform DNA. The protein is Crossover junction endodeoxyribonuclease RuvC of Bifidobacterium animalis subsp. lactis (strain AD011).